The primary structure comprises 186 residues: GTP cyclohydrolase 1 (186 aa).

The Zn(2+) site is built by cysteine 78, histidine 81, and cysteine 150.

This sequence belongs to the GTP cyclohydrolase I family. In terms of assembly, toroid-shaped homodecamer, composed of two pentamers of five dimers.

The enzyme catalyses GTP + H2O = 7,8-dihydroneopterin 3'-triphosphate + formate + H(+). It functions in the pathway cofactor biosynthesis; 7,8-dihydroneopterin triphosphate biosynthesis; 7,8-dihydroneopterin triphosphate from GTP: step 1/1. The protein is GTP cyclohydrolase 1 of Enterococcus faecalis (strain ATCC 700802 / V583).